Consider the following 552-residue polypeptide: Hyaluronan synthase 2 (552 aa).

Over 1–11 the chain is Cytoplasmic; sequence MHCERFLCVLR. The helical transmembrane segment at 12–32 threads the bilayer; the sequence is IIGTTLFGVSLLLGITAAYIV. At 33–45 the chain is on the extracellular side; the sequence is GYQFIQTDNYYFS. Residues 46–66 form a helical membrane-spanning segment; it reads FGLYGAFLASHLIIQSLFAFL. The Cytoplasmic portion of the chain corresponds to 67 to 374; sequence EHRKMKKSLE…NAMWFHKHHL (308 aa). Residue threonine 110 is modified to Phosphothreonine. A Glycyl lysine isopeptide (Lys-Gly) (interchain with G-Cter in ubiquitin) cross-link involves residue lysine 190. An O-linked (GlcNAc) serine glycan is attached at serine 221. At threonine 328 the chain carries Phosphothreonine. A helical transmembrane segment spans residues 375-395; that stretch reads WMTYEAVITGFFPFFLIATVI. Topologically, residues 396–402 are extracellular; that stretch reads QLFYRGK. Residues 403-423 traverse the membrane as a helical segment; it reads IWNILLFLLTVQLVGLIKSSF. The Cytoplasmic segment spans residues 424-429; it reads ASCLRG. The helical transmembrane segment at 430-450 threads the bilayer; sequence NIVMVFMSLYSVLYMSSLLPA. Residues 451 to 475 lie on the Extracellular side of the membrane; the sequence is KMFAIATINKAGWGTSGRKTIVVNF. A helical membrane pass occupies residues 476–496; it reads IGLIPVSVWFTILLGGVIFTI. Residues 497–510 are Cytoplasmic-facing; it reads YKESKKPFSESKQT. A helical transmembrane segment spans residues 511–531; the sequence is VLIVGTLIYACYWVMLLTLYV. Over 532-552 the chain is Extracellular; sequence VLINKCGRRKKGQQYDMVLDV.

Belongs to the NodC/HAS family. Homodimer; dimerization promotes enzymatic activity. Forms heterodimer with HAS3. Forms heterodimer with HAS1. Mg(2+) is required as a cofactor. Post-translationally, phosphorylation at Thr-328 is essential for hyaluronan synthase activity. In terms of processing, O-GlcNAcylation at Ser-221 increases the stability of HAS2 and plasma membrane localization. Ubiquitination at Lys-190; this ubiquitination is essential for hyaluronan synthase activity and homo- or hetero-oligomerization. Can also be poly-ubiquitinated. Deubiquitinated by USP17L22/USP17 and USP4. USP17L22/USP17 efficiently removes 'Lys-63'- and 'Lys-48'-linked polyubiquitin chains, whereas USP4 preferentially removes monoubiquitination and, partially, both 'Lys-63'- and 'Lys-48'-linked polyubiquitin chain. As to expression, expressed in heart, brain, spleen, lung and skeletal muscle.

It is found in the cell membrane. The protein resides in the endoplasmic reticulum membrane. It localises to the vesicle. Its subcellular location is the golgi apparatus membrane. The protein localises to the lysosome. The enzyme catalyses [hyaluronan](n) + UDP-N-acetyl-alpha-D-glucosamine = N-acetyl-beta-D-glucosaminyl-(1-&gt;4)-[hyaluronan](n) + UDP + H(+). The catalysed reaction is N-acetyl-beta-D-glucosaminyl-(1-&gt;4)-[hyaluronan](n) + UDP-alpha-D-glucuronate = [hyaluronan](n+1) + UDP + H(+). It participates in glycan biosynthesis; hyaluronan biosynthesis. Its function is as follows. Catalyzes the addition of GlcNAc or GlcUA monosaccharides to the nascent hyaluronan polymer. Therefore, it is essential to hyaluronan synthesis a major component of most extracellular matrices that has a structural role in tissues architectures and regulates cell adhesion, migration and differentiation. This is one of the isozymes catalyzing that reaction and it is particularly responsible for the synthesis of high molecular mass hyaluronan. Required for the transition of endocardial cushion cells into mesenchymal cells, a process crucial for heart development. May also play a role in vasculogenesis. High molecular mass hyaluronan also play a role in early contact inhibition a process which stops cell growth when cells come into contact with each other or the extracellular matrix. Functionally, catalyzes the addition of GlcNAc or GlcUA monosaccharides to the nascent hyaluronan polymer. Therefore, it is essential to hyaluronan synthesis a major component of most extracellular matrices that has a structural role in tissues architectures and regulates cell adhesion, migration and differentiation. This is one of three isoenzymes responsible for cellular hyaluronan synthesis and it is particularly responsible for the synthesis of high molecular mass hyaluronan. The polypeptide is Hyaluronan synthase 2 (Mus musculus (Mouse)).